Reading from the N-terminus, the 396-residue chain is Elongation factor Tu (396 aa).

Residues 10-206 (KPHVNVGTIG…ALDSFIPEPT (197 aa)) form the tr-type G domain. The segment at 19 to 26 (GHVDHGKT) is G1. 19 to 26 (GHVDHGKT) is a binding site for GTP. Threonine 26 serves as a coordination point for Mg(2+). Residues 60–64 (GITIS) form a G2 region. Residues 81–84 (DCPG) form a G3 region. GTP-binding positions include 81–85 (DCPGH) and 136–139 (NKAD). The tract at residues 136–139 (NKAD) is G4. Residues 174–176 (SAR) form a G5 region.

This sequence belongs to the TRAFAC class translation factor GTPase superfamily. Classic translation factor GTPase family. EF-Tu/EF-1A subfamily. Monomer.

The protein resides in the cytoplasm. It catalyses the reaction GTP + H2O = GDP + phosphate + H(+). Functionally, GTP hydrolase that promotes the GTP-dependent binding of aminoacyl-tRNA to the A-site of ribosomes during protein biosynthesis. This Xanthomonas euvesicatoria pv. vesicatoria (strain 85-10) (Xanthomonas campestris pv. vesicatoria) protein is Elongation factor Tu.